Here is a 417-residue protein sequence, read N- to C-terminus: Serine hydroxymethyltransferase (417 aa).

Residues leucine 121 and 125–127 (GHL) contribute to the (6S)-5,6,7,8-tetrahydrofolate site. Position 230 is an N6-(pyridoxal phosphate)lysine (lysine 230). A (6S)-5,6,7,8-tetrahydrofolate-binding site is contributed by glutamate 245.

The protein belongs to the SHMT family. In terms of assembly, homodimer. It depends on pyridoxal 5'-phosphate as a cofactor.

Its subcellular location is the cytoplasm. The enzyme catalyses (6R)-5,10-methylene-5,6,7,8-tetrahydrofolate + glycine + H2O = (6S)-5,6,7,8-tetrahydrofolate + L-serine. Its pathway is one-carbon metabolism; tetrahydrofolate interconversion. The protein operates within amino-acid biosynthesis; glycine biosynthesis; glycine from L-serine: step 1/1. In terms of biological role, catalyzes the reversible interconversion of serine and glycine with tetrahydrofolate (THF) serving as the one-carbon carrier. This reaction serves as the major source of one-carbon groups required for the biosynthesis of purines, thymidylate, methionine, and other important biomolecules. Also exhibits THF-independent aldolase activity toward beta-hydroxyamino acids, producing glycine and aldehydes, via a retro-aldol mechanism. In Desulfitobacterium hafniense (strain DSM 10664 / DCB-2), this protein is Serine hydroxymethyltransferase.